Here is a 316-residue protein sequence, read N- to C-terminus: Probable cell division protein WhiA (316 aa).

Residues 277–310 (SLEQLGRLADPPITKDAIAGRIRRLLQLAEKTEK) constitute a DNA-binding region (H-T-H motif).

It belongs to the WhiA family.

Functionally, involved in cell division and chromosome segregation. The chain is Probable cell division protein WhiA from Bifidobacterium adolescentis (strain ATCC 15703 / DSM 20083 / NCTC 11814 / E194a).